Consider the following 305-residue polypeptide: Ribonuclease BN (305 aa).

Residues His-64, His-66, Asp-68, His-69, His-141, Asp-212, and His-270 each contribute to the Zn(2+) site. Asp-68 (proton acceptor) is an active-site residue.

Belongs to the RNase Z family. RNase BN subfamily. In terms of assembly, homodimer. Zn(2+) is required as a cofactor.

In terms of biological role, zinc phosphodiesterase, which has both exoribonuclease and endoribonuclease activities. The polypeptide is Ribonuclease BN (Shigella flexneri).